We begin with the raw amino-acid sequence, 343 residues long: Protein RecA (343 aa).

Residue 66–73 participates in ATP binding; that stretch reads GPESSGKT.

The protein belongs to the RecA family.

Its subcellular location is the cytoplasm. Functionally, can catalyze the hydrolysis of ATP in the presence of single-stranded DNA, the ATP-dependent uptake of single-stranded DNA by duplex DNA, and the ATP-dependent hybridization of homologous single-stranded DNAs. It interacts with LexA causing its activation and leading to its autocatalytic cleavage. This Rickettsia bellii (strain OSU 85-389) protein is Protein RecA.